The following is a 961-amino-acid chain: RNA polymerase II subunit A C-terminal domain phosphatase (961 aa).

Met-1 carries the N-acetylmethionine modification. Positions 178-344 (HRNRKLVLMV…SRESQTRKKV (167 aa)) constitute an FCP1 homology domain. A disordered region spans residues 328–589 (DMNAPPGSRE…EEEDTDEDDH (262 aa)). Residues 394 to 406 (DSPRPGKPDERDI) show a composition bias toward basic and acidic residues. The residue at position 395 (Ser-395) is a Phosphoserine. Over residues 450-462 (LDFDLSSDSESSS) the composition is skewed to acidic residues. The segment covering 463 to 475 (ESEGTKSSSSASD) has biased composition (low complexity). A compositionally biased stretch (acidic residues) spans 575 to 588 (SMEEEEEEDTDEDD). The 100-residue stretch at 629–728 (LKSKVLADVA…DKVEEQLFPL (100 aa)) folds into the BRCT domain. 2 positions are modified to phosphoserine: Ser-674 and Ser-740. Disordered regions lie at residues 730-752 (DDHT…GVPP) and 780-949 (KLIR…ADEM). An N6-acetyllysine modification is found at Lys-780. Over residues 793–803 (SSSLPIRQEPS) the composition is skewed to polar residues. The residue at position 839 (Ser-839) is a Phosphoserine. Over residues 850–859 (CKEDLESMDK) the composition is skewed to basic and acidic residues. Composition is skewed to acidic residues over residues 860–873 (EVDD…DDSD) and 937–947 (NEDEGSSSEAD). Phosphoserine is present on residues Ser-869 and Ser-872.

As to quaternary structure, homodimer. Interacts with GTF2F1. Interacts with WDR77, SNRPB and SNRNP70. In terms of processing, phosphorylated. In the presence of TFIIF, the phosphorylated form has an increased CTD phosphatase activity. The phosphorylation is required for the physical interaction with GTF2F1. As to expression, ubiquitously expressed.

It localises to the nucleus. Its subcellular location is the cytoplasm. It is found in the cytoskeleton. The protein resides in the microtubule organizing center. The protein localises to the centrosome. It localises to the spindle pole. Its subcellular location is the midbody. It catalyses the reaction O-phospho-L-seryl-[protein] + H2O = L-seryl-[protein] + phosphate. The catalysed reaction is O-phospho-L-threonyl-[protein] + H2O = L-threonyl-[protein] + phosphate. Functionally, processively dephosphorylates 'Ser-2' and 'Ser-5' of the heptad repeats YSPTSPS in the C-terminal domain of the largest RNA polymerase II subunit. This promotes the activity of RNA polymerase II. Plays a role in the exit from mitosis by dephosphorylating crucial mitotic substrates (USP44, CDC20 and WEE1) that are required for M-phase-promoting factor (MPF)/CDK1 inactivation. This is RNA polymerase II subunit A C-terminal domain phosphatase (CTDP1) from Homo sapiens (Human).